A 667-amino-acid polypeptide reads, in one-letter code: High affinity sulfate transporter 1 (667 aa).

The segment at 16 to 38 (ETRSNSSSHRHGGGGGGDDTTSL) is disordered. 11 helical membrane-spanning segments follow: residues 106–126 (GDFI…LAYA), 131–151 (LDPW…AFMG), 156–176 (IAIG…SNEI), 185–205 (LRLA…LGVC), 208–228 (GFLI…GAAI), 269–289 (WETI…KYIA), 296–316 (FWVS…FVYI), 350–370 (GAGV…AIAI), 425–445 (VSNI…TPLF), 452–472 (VLAS…AMVL), and 486–506 (GAFF…AVAI). The 124-residue stretch at 537-660 (QYPKAAQIPG…LTVADAVATY (124 aa)) folds into the STAS domain.

Belongs to the SLC26A/SulP transporter (TC 2.A.53) family.

The protein resides in the membrane. High-affinity H(+)/sulfate cotransporter that mediates the uptake of sulfate by plant roots from low concentrations of sulfate in the soil solution. This is High affinity sulfate transporter 1 (ST1) from Stylosanthes hamata (Caribbean stylo).